The following is a 311-amino-acid chain: Probable cobalamin biosynthesis protein CobD (311 aa).

The next 4 membrane-spanning stretches (helical) occupy residues 53 to 73, 76 to 96, 157 to 177, and 288 to 308; these read FIFG…AIYG, ILIN…FLIS, DSII…AFIY, and FSID…YVIF.

Belongs to the CobD/CbiB family.

Its subcellular location is the cell membrane. Its pathway is cofactor biosynthesis; adenosylcobalamin biosynthesis. In terms of biological role, converts cobyric acid to cobinamide by the addition of aminopropanol on the F carboxylic group. This chain is Probable cobalamin biosynthesis protein CobD, found in Methanococcus aeolicus (strain ATCC BAA-1280 / DSM 17508 / OCM 812 / Nankai-3).